The sequence spans 397 residues: Tryptophan synthase beta chain (397 aa).

Lys87 is modified (N6-(pyridoxal phosphate)lysine).

Belongs to the TrpB family. As to quaternary structure, tetramer of two alpha and two beta chains. Pyridoxal 5'-phosphate is required as a cofactor.

The catalysed reaction is (1S,2R)-1-C-(indol-3-yl)glycerol 3-phosphate + L-serine = D-glyceraldehyde 3-phosphate + L-tryptophan + H2O. It participates in amino-acid biosynthesis; L-tryptophan biosynthesis; L-tryptophan from chorismate: step 5/5. Its function is as follows. The beta subunit is responsible for the synthesis of L-tryptophan from indole and L-serine. This Escherichia coli O139:H28 (strain E24377A / ETEC) protein is Tryptophan synthase beta chain.